A 379-amino-acid chain; its full sequence is Zinc finger protein 883 (379 aa).

13 C2H2-type zinc fingers span residues 13 to 35 (YLCTECGKGYTCLASLTQHQKTH), 41 to 63 (YECKICGKSFTRNSNLVQHQRIH), 69 to 91 (YECNECGKAFSQSTNLIQHQRVH), 97 to 119 (YECNECEKTFSHRSSLRNHERIH), 125 to 147 (YPCNECGKAFSHISALTQHHRIH), 153 to 175 (YECTECGKTFSRSTHLIEHQGIH), 181 to 203 (YQCKQCRKVFCHSTSLIRHQRTH), 209 to 231 (YECNECGKAFSHTPAFIQHQRIH), 237 to 259 (YECNACGKAFNRSAHLTEHQRTH), 265 to 287 (YVCKECGKTFSRSTHLTEHLKIH), 293 to 315 (YQCNECQKLFCYRTSLIRHQRTH), 321 to 343 (YQCNECGKSFSLSSALTKHKRIH), and 349 to 371 (YQCTKCGDVFCHSTSLIRHQKTH).

Belongs to the krueppel C2H2-type zinc-finger protein family.

The protein localises to the nucleus. May be involved in transcriptional regulation. The protein is Zinc finger protein 883 (ZNF883) of Homo sapiens (Human).